The chain runs to 185 residues: Large ribosomal subunit protein uL6 (185 aa).

It belongs to the universal ribosomal protein uL6 family. In terms of assembly, part of the 50S ribosomal subunit.

Its function is as follows. This protein binds to the 23S rRNA, and is important in its secondary structure. It is located near the subunit interface in the base of the L7/L12 stalk, and near the tRNA binding site of the peptidyltransferase center. The polypeptide is Large ribosomal subunit protein uL6 (Staphylothermus marinus (strain ATCC 43588 / DSM 3639 / JCM 9404 / F1)).